A 253-amino-acid chain; its full sequence is Ribonuclease HII (253 aa).

One can recognise an RNase H type-2 domain in the interval Gly-30–Pro-221. 3 residues coordinate a divalent metal cation: Asp-36, Glu-37, and Asp-130.

Belongs to the RNase HII family. Requires Mn(2+) as cofactor. Mg(2+) is required as a cofactor.

It is found in the cytoplasm. It catalyses the reaction Endonucleolytic cleavage to 5'-phosphomonoester.. In terms of biological role, endonuclease that specifically degrades the RNA of RNA-DNA hybrids. This is Ribonuclease HII from Mycolicibacterium gilvum (strain PYR-GCK) (Mycobacterium gilvum (strain PYR-GCK)).